Reading from the N-terminus, the 225-residue chain is MGIVVGVDEAGRGSLVGDLVVAGFAVEEARLGELQSLGVRDSKQLSPAARVELYREISGVGFFTVEAIRPWEIDGENINILVTKAVEEIVSRIVSYLGVHPSLVVVDKYGDVQGLRLALTRLGIEPRSILVEEKADSRYPVVSAASIVAKVVRDARLQVLRRMYGVRGSGYPSDPETREWVREVFARGEAPRVIRYTWSTVRKLGGPWRSKKAGRNRSLDEFLGG.

An RNase H type-2 domain is found at glycine 2–serine 210. Residues aspartate 8, glutamate 9, and aspartate 107 each coordinate a divalent metal cation.

The protein belongs to the RNase HII family. Mn(2+) serves as cofactor. Requires Mg(2+) as cofactor.

It localises to the cytoplasm. The enzyme catalyses Endonucleolytic cleavage to 5'-phosphomonoester.. Functionally, endonuclease that specifically degrades the RNA of RNA-DNA hybrids. The protein is Ribonuclease HII (rnhB) of Aeropyrum pernix (strain ATCC 700893 / DSM 11879 / JCM 9820 / NBRC 100138 / K1).